Here is a 1083-residue protein sequence, read N- to C-terminus: FACT complex subunit spt16 (1083 aa).

Ser-437 carries the phosphoserine modification. A coiled-coil region spans residues 466-504; that stretch reads LESKLRNEINTEEKRKEHQRELAQQLNERAKDRLARQGN. Residues 923-1083 are disordered; that stretch reads FEQGGWTFLD…NGHKSKKSRH (161 aa). Residues 935–987 show a composition bias toward acidic residues; it reads SGSEGENETAESEEDEAYNPTDAESDEESDEDSEYSEASEDSEESDEDLGSDE. Basic and acidic residues predominate over residues 988 to 1023; that stretch reads ESGKDWSDLEREAAEEDRNHDYAADDKPRNGKFDSK. Residues 1024–1033 show a composition bias toward basic residues; the sequence is KHGKSSKHSP. A compositionally biased stretch (basic and acidic residues) spans 1058 to 1076; sequence SSKDKDRKRSRDDSRDNGH.

The protein belongs to the peptidase M24 family. SPT16 subfamily. As to quaternary structure, component of the FACT complex, a stable heterodimer of dre4/spt16 and Ssrp. Interacts with TRL/GAGA.

It localises to the nucleus. The protein resides in the chromosome. Component of the FACT complex, a general chromatin factor that acts to reorganize nucleosomes. The FACT complex is involved in multiple processes that require DNA as a template such as mRNA elongation, DNA replication and DNA repair. During transcription elongation the FACT complex acts as a histone chaperone that both destabilizes and restores nucleosomal structure. It facilitates the passage of RNA polymerase II and transcription by promoting the dissociation of one histone H2A-H2B dimer from the nucleosome, then subsequently promotes the reestablishment of the nucleosome following the passage of RNA polymerase II. The FACT complex is required for expression of Hox genes. The protein is FACT complex subunit spt16 (dre4) of Drosophila melanogaster (Fruit fly).